A 515-amino-acid chain; its full sequence is MGSEMEPLLRAWSYFRRRKFQLCADLCTQMLEKSPYDQEPAPDLPVSQAAWILKARALTEMVYIDEIDVDQEGIAEMILDENAIAQVPRPGTSLKLPGTNQTGGPTQAVRPITQAGRPITGFLRPSTQSGRPGTMEQAIRTPRTAYTARPITSSSGRFVRLGTASMLTSPDGPFINLSRLNLTKYSQKPKLAKALFEYILHHENDVKMALDLASLSTEYSQYKDWWWKVQIGKCYYRLGMYREAEKQFKSALKQQEMVDTFLYLAKVYIILDQPVTALNLFKQGLDKFPGEVTLLCGIARIYEEMNNSSSAAEYYKEVLKQDNTHVEAIACIGSNHFYSDQPEVALRFYRRLLQMGVYNCQLFNNLGLCCFYAQQYDMTLTSFERALSLAENEEEAADVWYNLGHIAVGIGDTNLAHQCFRLALVHNNHHAEAYNNLAVLEMRKGHVEQARALLQTASSLAPHMYEPHFNFATVSDKIGDLQRSYVAAQKSEVAFPEHVDTQHLIKQLKQHFAML.

A TPR 1 repeat occupies 4–37 (EMEPLLRAWSYFRRRKFQLCADLCTQMLEKSPYD). 2 disordered regions span residues 89 to 109 (RPGT…TQAV) and 118 to 137 (PITG…TMEQ). 7 TPR repeats span residues 225–258 (WWWK…QEMV), 259–291 (DTFL…FPGE), 292–325 (VTLL…DNTH), 326–359 (VEAI…GVYN), 360–393 (CQLF…AENE), 397–430 (ADVW…NNHH), and 432–464 (EAYN…APHM).

Part of BBSome complex, that contains BBS1, BBS2, BBS4, BBS5, BBS7, BBS8/TTC8, BBS9 and BBIP10. Interacts with PCM1. Interacts with CCDC28B. Interacts with PKD1. In terms of tissue distribution, isoform 1 is retina-specific whereas isoform 2 is ubiquitously expressed.

It is found in the cytoplasm. Its subcellular location is the cytoskeleton. It localises to the microtubule organizing center. The protein resides in the centrosome. The protein localises to the centriole. It is found in the cell projection. Its subcellular location is the cilium membrane. It localises to the centriolar satellite. The protein resides in the cilium. Its function is as follows. The BBSome complex is thought to function as a coat complex required for sorting of specific membrane proteins to the primary cilia. The BBSome complex is required for ciliogenesis but is dispensable for centriolar satellite function. This ciliogenic function is mediated in part by the Rab8 GDP/GTP exchange factor, which localizes to the basal body and contacts the BBSome. Rab8(GTP) enters the primary cilium and promotes extension of the ciliary membrane. Firstly the BBSome associates with the ciliary membrane and binds to RAB3IP/Rabin8, the guanosyl exchange factor (GEF) for Rab8 and then the Rab8-GTP localizes to the cilium and promotes docking and fusion of carrier vesicles to the base of the ciliary membrane. The BBSome complex, together with the LTZL1, controls SMO ciliary trafficking and contributes to the sonic hedgehog (SHH) pathway regulation. Required for proper BBSome complex assembly and its ciliary localization. This is Tetratricopeptide repeat protein 8 (Ttc8) from Mus musculus (Mouse).